Here is a 141-residue protein sequence, read N- to C-terminus: Short-chain diamines transporter (141 aa).

4 consecutive transmembrane segments (helical) span residues 16–36, 39–59, 76–96, and 103–123; these read VILL…PLEV, TLGI…NHFF, ILHA…MVAY, and WQAI…TFIF.

Belongs to the proteobacterial antimicrobial compound efflux (PACE) (TC 2.A.117) family.

The protein resides in the cell inner membrane. Mediates the efflux of short-chain diamines when energized by an electrochemical gradient. Involved in resistance to the synthetic biocide chlorhexidine, a widely used antiseptic and disinfectant in both hospital and community settings. Interacts directly with chlorhexidine and mediates its efflux via an energy-dependent mechanism. The protein is Short-chain diamines transporter of Acinetobacter baylyi (strain ATCC 33305 / BD413 / ADP1).